Reading from the N-terminus, the 220-residue chain is MAAERGLPPIELHRLGRRPYVPVWQAMREFTDTRDADSPDQFWLVEHDPVFTQGQAGKAEHLLMPGDIPVVATDRGGQVTYHGPGQVVLYPLIDVRRGKLGVRELVSALEQAVIDLLAAHGVTARARPDAPGVYVGETKIASLGLRIRRGASFHGVALNVDGDLAPFQCINPCGHAGMAMTRLVDLVDDCPGCEAVALELAECLARQLGRRLTPMDTVPA.

The region spanning 36–212 (ADSPDQFWLV…CLARQLGRRL (177 aa)) is the BPL/LPL catalytic domain. Substrate is bound by residues 75 to 82 (RGGQVTYH), 142 to 144 (SLG), and 155 to 157 (GVA). C173 (acyl-thioester intermediate) is an active-site residue.

It belongs to the LipB family.

The protein localises to the cytoplasm. The catalysed reaction is octanoyl-[ACP] + L-lysyl-[protein] = N(6)-octanoyl-L-lysyl-[protein] + holo-[ACP] + H(+). It participates in protein modification; protein lipoylation via endogenous pathway; protein N(6)-(lipoyl)lysine from octanoyl-[acyl-carrier-protein]: step 1/2. Catalyzes the transfer of endogenously produced octanoic acid from octanoyl-acyl-carrier-protein onto the lipoyl domains of lipoate-dependent enzymes. Lipoyl-ACP can also act as a substrate although octanoyl-ACP is likely to be the physiological substrate. This Chromohalobacter salexigens (strain ATCC BAA-138 / DSM 3043 / CIP 106854 / NCIMB 13768 / 1H11) protein is Octanoyltransferase.